Here is a 172-residue protein sequence, read N- to C-terminus: Myosin regulatory light chain (172 aa).

Position 17 is a phosphothreonine (Thr-17). Ser-18 is modified (phosphoserine). 3 consecutive EF-hand domains span residues 27 to 62 (AQIQ…LGKE), 98 to 133 (DPEE…MGER), and 134 to 168 (YSEE…GTKD). Asp-40, Asn-42, Asp-44, and Asp-51 together coordinate Ca(2+).

As to quaternary structure, myosin is a hexamer of 2 heavy chains and 4 light chains (two regulatory light chains and two essential light chains). In terms of processing, may be phosphorylated by let-502 or/and pak-1 and dephosphorylated by mel-11 to regulate its activation and myosin II-mediated contraction. As to expression, expressed in the spermathecal and uterine walls. Weak expression in gonadal sheath and intestinal muscle. Not detected in vulval, pharyngeal or body wall muscles.

It localises to the cytoplasm. Its subcellular location is the cytoskeleton. Functionally, regulates myosin II activity and organization during embryo elongation. May be involved in the organization of mlc-5 into bundles. Required maternally for cytokinesis during meiosis and mitosis in the early embryo and for the establishment of embryonic anterior-posterior polarity. The polypeptide is Myosin regulatory light chain (Caenorhabditis elegans).